Reading from the N-terminus, the 200-residue chain is Holliday junction branch migration complex subunit RuvA (200 aa).

A domain I region spans residues 1–63 (MYAYVKGKLT…EDAQLLYGFS (63 aa)). The interval 64 to 142 (SEEEKDMFLS…ITEEDSDSLL (79 aa)) is domain II. The segment at 143-149 (QVDATST) is flexible linker. A domain III region spans residues 150–200 (EQDQFVQEAMLALEALGYSKRELAKVEKTLNKNKYDSVDEAVKAGLQLVVS).

Belongs to the RuvA family. Homotetramer. Forms an RuvA(8)-RuvB(12)-Holliday junction (HJ) complex. HJ DNA is sandwiched between 2 RuvA tetramers; dsDNA enters through RuvA and exits via RuvB. An RuvB hexamer assembles on each DNA strand where it exits the tetramer. Each RuvB hexamer is contacted by two RuvA subunits (via domain III) on 2 adjacent RuvB subunits; this complex drives branch migration. In the full resolvosome a probable DNA-RuvA(4)-RuvB(12)-RuvC(2) complex forms which resolves the HJ.

It localises to the cytoplasm. The RuvA-RuvB-RuvC complex processes Holliday junction (HJ) DNA during genetic recombination and DNA repair, while the RuvA-RuvB complex plays an important role in the rescue of blocked DNA replication forks via replication fork reversal (RFR). RuvA specifically binds to HJ cruciform DNA, conferring on it an open structure. The RuvB hexamer acts as an ATP-dependent pump, pulling dsDNA into and through the RuvAB complex. HJ branch migration allows RuvC to scan DNA until it finds its consensus sequence, where it cleaves and resolves the cruciform DNA. The polypeptide is Holliday junction branch migration complex subunit RuvA (Staphylococcus aureus (strain MRSA252)).